A 445-amino-acid chain; its full sequence is Chromosome partition protein MukF (445 aa).

The segment at 213-241 (LSETSSTLRELQDTLQAASDELQTQILDI) is leucine-zipper.

The protein belongs to the MukF family. Interacts, and probably forms a ternary complex, with MukE and MukB via its C-terminal region. The complex formation is stimulated by calcium or magnesium. It is required for an interaction between MukE and MukB.

It is found in the cytoplasm. It localises to the nucleoid. In terms of biological role, involved in chromosome condensation, segregation and cell cycle progression. May participate in facilitating chromosome segregation by condensation DNA from both sides of a centrally located replisome during cell division. Not required for mini-F plasmid partitioning. Probably acts via its interaction with MukB and MukE. Overexpression results in anucleate cells. It has a calcium binding activity. This chain is Chromosome partition protein MukF, found in Vibrio campbellii (strain ATCC BAA-1116).